Here is a 56-residue protein sequence, read N- to C-terminus: uncharacterized protein (56 aa).

A helical membrane pass occupies residues 2–22 (ILYIIVAISILLNIILGIKVI).

It is found in the membrane. This is an uncharacterized protein from Methanocaldococcus jannaschii (strain ATCC 43067 / DSM 2661 / JAL-1 / JCM 10045 / NBRC 100440) (Methanococcus jannaschii).